Here is a 2282-residue protein sequence, read N- to C-terminus: Protein Ycf2 (2282 aa).

1637–1644 (GSIGTGRS) serves as a coordination point for ATP.

It belongs to the Ycf2 family.

It localises to the plastid. The protein localises to the chloroplast stroma. Functionally, probable ATPase of unknown function. Its presence in a non-photosynthetic plant (Epifagus virginiana) and experiments in tobacco indicate that it has an essential function which is probably not related to photosynthesis. This Citrus sinensis (Sweet orange) protein is Protein Ycf2.